The primary structure comprises 29 residues: Acidic phospholipase A2 Omo-E6 (29 aa).

Tyrosine 27 and glycine 29 together coordinate Ca(2+).

Requires Ca(2+) as cofactor. Expressed by the venom gland.

The protein resides in the secreted. It catalyses the reaction a 1,2-diacyl-sn-glycero-3-phosphocholine + H2O = a 1-acyl-sn-glycero-3-phosphocholine + a fatty acid + H(+). Functionally, snake venom phospholipase A2 (PLA2) that inhibits the ADP- and collagen-induced human platelet aggregation. Exhibits strong hydrolytic activities and prefers the anionic micelles (dPPC with deoxycholate) to the zwitterionic micelles (dPPC with Triton X-100). PLA2 catalyzes the calcium-dependent hydrolysis of the 2-acyl groups in 3-sn-phosphoglycerides. The chain is Acidic phospholipase A2 Omo-E6 from Ovophis monticola (Chinese mountain pitviper).